Consider the following 423-residue polypeptide: Glutamate--cysteine ligase EgtA (423 aa).

It belongs to the glutamate--cysteine ligase type 2 family. EgtA subfamily.

The enzyme catalyses L-cysteine + L-glutamate + ATP = gamma-L-glutamyl-L-cysteine + ADP + phosphate + H(+). The protein operates within amino-acid biosynthesis; ergothioneine biosynthesis. Functionally, catalyzes the synthesis of gamma-glutamylcysteine (gamma-GC). This compound is used as substrate for the biosynthesis of the low-molecular thiol compound ergothioneine. The polypeptide is Glutamate--cysteine ligase EgtA (Mycolicibacterium smegmatis (strain ATCC 700084 / mc(2)155) (Mycobacterium smegmatis)).